A 341-amino-acid polypeptide reads, in one-letter code: MTEMFYDDDADLSIIQGRKVAIVGYGSQGHAHAQNLRDSGVEVVIALKDGSKSIAKAEDAGFTVKNVADAAEWADVIMILAPDQHQRSIFTESIKDKLTPGKALAFAHGFNIRFGYIQAPEGVDVILVAPKAPGHTVRREFEAGRGIPDIIAVEQDASGSAWDLAKSYAKAIGGTRAGVIKTTFTEETETDLFGEQSVLCGGVSQLIQYGFETLTEAGYQPQIAYFEVLHELKLIVDLMWEGGIAKQRWSVSDTAEYGDYVSGPRVITPEVKENMKAVLADIQSGAFAKRFIEDQDNGGVEFKELRAKAEQHPIEEVGRELRSLFSWQQQDADYVEGSAAR.

The KARI N-terminal Rossmann domain maps to 1 to 182 (MTEMFYDDDA…GGTRAGVIKT (182 aa)). NADP(+)-binding positions include 25 to 28 (YGSQ), K48, S51, S53, and 83 to 86 (DQHQ). H108 is a catalytic residue. Residue G134 coordinates NADP(+). One can recognise a KARI C-terminal knotted domain in the interval 183–328 (TFTEETETDL…RELRSLFSWQ (146 aa)). Positions 191, 195, 227, and 231 each coordinate Mg(2+). Position 252 (S252) interacts with substrate.

Belongs to the ketol-acid reductoisomerase family. The cofactor is Mg(2+).

It carries out the reaction (2R)-2,3-dihydroxy-3-methylbutanoate + NADP(+) = (2S)-2-acetolactate + NADPH + H(+). The enzyme catalyses (2R,3R)-2,3-dihydroxy-3-methylpentanoate + NADP(+) = (S)-2-ethyl-2-hydroxy-3-oxobutanoate + NADPH + H(+). It participates in amino-acid biosynthesis; L-isoleucine biosynthesis; L-isoleucine from 2-oxobutanoate: step 2/4. Its pathway is amino-acid biosynthesis; L-valine biosynthesis; L-valine from pyruvate: step 2/4. Involved in the biosynthesis of branched-chain amino acids (BCAA). Catalyzes an alkyl-migration followed by a ketol-acid reduction of (S)-2-acetolactate (S2AL) to yield (R)-2,3-dihydroxy-isovalerate. In the isomerase reaction, S2AL is rearranged via a Mg-dependent methyl migration to produce 3-hydroxy-3-methyl-2-ketobutyrate (HMKB). In the reductase reaction, this 2-ketoacid undergoes a metal-dependent reduction by NADPH to yield (R)-2,3-dihydroxy-isovalerate. In Pseudarthrobacter chlorophenolicus (strain ATCC 700700 / DSM 12829 / CIP 107037 / JCM 12360 / KCTC 9906 / NCIMB 13794 / A6) (Arthrobacter chlorophenolicus), this protein is Ketol-acid reductoisomerase (NADP(+)).